The chain runs to 242 residues: Glucosamine-6-phosphate deaminase (242 aa).

Residue Asp-67 is the Proton acceptor; for enolization step of the active site. Asn-136 acts as the For ring-opening step in catalysis. His-138 acts as the Proton acceptor; for ring-opening step in catalysis. The For ring-opening step role is filled by Glu-143.

This sequence belongs to the glucosamine/galactosamine-6-phosphate isomerase family. NagB subfamily.

The catalysed reaction is alpha-D-glucosamine 6-phosphate + H2O = beta-D-fructose 6-phosphate + NH4(+). It functions in the pathway amino-sugar metabolism; N-acetylneuraminate degradation; D-fructose 6-phosphate from N-acetylneuraminate: step 5/5. Catalyzes the reversible isomerization-deamination of glucosamine 6-phosphate (GlcN6P) to form fructose 6-phosphate (Fru6P) and ammonium ion. The chain is Glucosamine-6-phosphate deaminase from Clostridium beijerinckii (strain ATCC 51743 / NCIMB 8052) (Clostridium acetobutylicum).